The following is a 106-amino-acid chain: Urease subunit beta (106 aa).

This sequence belongs to the urease beta subunit family. Heterotrimer of UreA (gamma), UreB (beta) and UreC (alpha) subunits. Three heterotrimers associate to form the active enzyme.

The protein localises to the cytoplasm. It carries out the reaction urea + 2 H2O + H(+) = hydrogencarbonate + 2 NH4(+). It functions in the pathway nitrogen metabolism; urea degradation; CO(2) and NH(3) from urea (urease route): step 1/1. This is Urease subunit beta from Acinetobacter baumannii (strain SDF).